Here is a 281-residue protein sequence, read N- to C-terminus: Glutamate racemase (281 aa).

Residues 10 to 11 and 42 to 43 each bind substrate; these read DS and YG. The active-site Proton donor/acceptor is the cysteine 74. 75 to 76 provides a ligand contact to substrate; that stretch reads NT. The active-site Proton donor/acceptor is cysteine 190. Residue 191–192 participates in substrate binding; that stretch reads TH.

It belongs to the aspartate/glutamate racemases family.

It catalyses the reaction L-glutamate = D-glutamate. It participates in cell wall biogenesis; peptidoglycan biosynthesis. Provides the (R)-glutamate required for cell wall biosynthesis. This Oenococcus oeni (strain ATCC BAA-331 / PSU-1) protein is Glutamate racemase.